Reading from the N-terminus, the 254-residue chain is MASAVVRVAGRRLSQQSASGAPVLLRQMFEPKSCTYTYLLGDRESREAVLIDPVLETAHRDAQLIKELGLKLLYAVNTHCHADHITGTGVLRSLLPGCQSVISRLSGAQADLHIGEGDSIRFGRFALETRASPGHTPGCVTFVLNDQSMAFTGDALLIRGCGRTDFQQGCAKTLYHSVHEKIFTLPGNCLIYPAHDYHGLTVSTVEEERTLNPRLTLSCEEFIKVMDNLNLPKPQQIDIAVPANMRCGVQTPPS.

The transit peptide at 1 to 7 (MASAVVR) directs the protein to the mitochondrion. Phosphoserine is present on residues Ser-14, Ser-17, and Ser-19. Residue Lys-32 is modified to N6-acetyllysine; alternate. At Lys-32 the chain carries N6-succinyllysine; alternate. Lys-66 is modified (N6-acetyllysine). Residues His-79, His-135, and Asp-154 each coordinate Fe cation. Residue Lys-172 is modified to N6-acetyllysine; alternate. Lys-172 bears the N6-succinyllysine; alternate mark.

Belongs to the metallo-beta-lactamase superfamily. Glyoxalase II family. As to quaternary structure, homodimer. Monomer. Interacts with TST. May interact with RELA. It depends on Fe(2+) as a cofactor.

It localises to the cytoplasm. The protein resides in the nucleus. Its subcellular location is the mitochondrion matrix. It carries out the reaction S-sulfanylglutathione + O2 + H2O = sulfite + glutathione + 2 H(+). Its function is as follows. First described as a protein that can shuttle between the nucleus and the cytoplasm and suppress p53-induced apoptosis by sequestering the transcription factor RELA/NFKB3 in the cytoplasm and preventing its accumulation in the nucleus. Sulfur dioxygenase that plays an essential role in hydrogen sulfide catabolism in the mitochondrial matrix. Hydrogen sulfide (H(2)S) is first oxidized by SQRDL, giving rise to cysteine persulfide residues. ETHE1 consumes molecular oxygen to catalyze the oxidation of the persulfide, once it has been transferred to a thiophilic acceptor, such as glutathione (R-SSH). Plays an important role in metabolic homeostasis in mitochondria by metabolizing hydrogen sulfide and preventing the accumulation of supraphysiological H(2)S levels that have toxic effects, due to the inhibition of cytochrome c oxidase. The sequence is that of Persulfide dioxygenase ETHE1, mitochondrial (Ethe1) from Mus musculus (Mouse).